The primary structure comprises 138 residues: Putative pre-16S rRNA nuclease (138 aa).

The protein belongs to the YqgF nuclease family.

It localises to the cytoplasm. Its function is as follows. Could be a nuclease involved in processing of the 5'-end of pre-16S rRNA. This Mycoplasma genitalium (strain ATCC 33530 / DSM 19775 / NCTC 10195 / G37) (Mycoplasmoides genitalium) protein is Putative pre-16S rRNA nuclease.